The primary structure comprises 216 residues: Protein Syd (216 aa).

Belongs to the Syd family.

It is found in the cell inner membrane. Interacts with the SecY protein in vivo. May bind preferentially to an uncomplexed state of SecY, thus functioning either as a chelating agent for excess SecY in the cell or as a regulatory factor that negatively controls the translocase function. The sequence is that of Protein Syd from Shewanella baltica (strain OS223).